A 321-amino-acid chain; its full sequence is Acyl-CoA 5-desaturase AL21 (321 aa).

The next 2 helical transmembrane spans lie at 42–62 (IFHI…PFTF) and 64–84 (WSAF…GTTL). Fe cation-binding residues include His-87, His-92, His-124, His-127, and His-128. The short motif at 87–92 (HRNLTH) is the Histidine box-1 element. The Histidine box-2 signature appears at 124-128 (HRYHH). Residues 190-210 (LQAALLYMFGGFPFIVWGMAV) traverse the membrane as a helical segment. His-227, His-256, His-259, and His-260 together coordinate Fe cation. The short motif at 256–260 (HNNHH) is the Histidine box-3 element.

This sequence belongs to the fatty acid desaturase type 1 family. Fe(2+) is required as a cofactor.

It is found in the membrane. The enzyme catalyses (11Z,14Z)-eicosadienoyl-CoA + AH2 + O2 = (5Z,11Z,14Z)-eicosatrienoyl-CoA + A + 2 H2O. The catalysed reaction is (11Z,14Z,17Z)-eicosatrienoyl-CoA + AH2 + O2 = (5Z,11Z,14Z,17Z)-eicosatetraenoyl-CoA + A + 2 H2O. Its pathway is lipid metabolism; polyunsaturated fatty acid biosynthesis. Its function is as follows. Catalyzes the desaturation of 20:2Delta(11,14) and 20:3Delta(11,14,17) to generate sciadonic acid (20:3Delta(5,11,14)) and juniperonic acid (20:4Delta(5,11,14,17)). The enzyme can also use 16:0 and 18:0 as substrates. This chain is Acyl-CoA 5-desaturase AL21, found in Anemone leveillei (Windflower).